A 102-amino-acid chain; its full sequence is Large ribosomal subunit protein mL63 (102 aa).

This sequence belongs to the mitochondrion-specific ribosomal protein mL63 family.

It is found in the mitochondrion. The sequence is that of Large ribosomal subunit protein mL63 (MRPL57) from Bos taurus (Bovine).